Reading from the N-terminus, the 362-residue chain is Peptide chain release factor 1 (362 aa).

Gln237 is subject to N5-methylglutamine.

This sequence belongs to the prokaryotic/mitochondrial release factor family. Post-translationally, methylated by PrmC. Methylation increases the termination efficiency of RF1.

It localises to the cytoplasm. In terms of biological role, peptide chain release factor 1 directs the termination of translation in response to the peptide chain termination codons UAG and UAA. The chain is Peptide chain release factor 1 from Marinomonas sp. (strain MWYL1).